The primary structure comprises 436 residues: GTPase Der (436 aa).

2 EngA-type G domains span residues 4 to 167 and 176 to 351; these read PVVA…PKGG and IKFC…DNHA. Residues 10 to 17, 57 to 61, 119 to 122, 182 to 189, 229 to 233, and 294 to 297 each bind GTP; these read GRPNVGKS, DTGGI, NKID, DTAGM, and NKWD. In terms of domain architecture, KH-like spans 352–436; the sequence is MRVQTNVLNE…PIKIIARPRK (85 aa).

It belongs to the TRAFAC class TrmE-Era-EngA-EngB-Septin-like GTPase superfamily. EngA (Der) GTPase family. Associates with the 50S ribosomal subunit.

Its function is as follows. GTPase that plays an essential role in the late steps of ribosome biogenesis. The chain is GTPase Der from Geobacillus kaustophilus (strain HTA426).